Consider the following 411-residue polypeptide: Elongation factor Tu, apicoplast (411 aa).

The tr-type G domain maps to K10–E214. The segment at G19–T26 is G1. G19 to T26 provides a ligand contact to GTP. Position 26 (T26) interacts with Mg(2+). The G2 stretch occupies residues G61–N65. Residues D82–G85 form a G3 region. Residues D82–H86 and N137–D140 each bind GTP. Positions N137–D140 are G4. Residues S175 to L177 form a G5 region.

This sequence belongs to the TRAFAC class translation factor GTPase superfamily. Classic translation factor GTPase family. EF-Tu/EF-1A subfamily.

It is found in the plastid. The protein localises to the apicoplast. The enzyme catalyses GTP + H2O = GDP + phosphate + H(+). In terms of biological role, GTP hydrolase that promotes the GTP-dependent binding of aminoacyl-tRNA to the A-site of ribosomes during protein biosynthesis. This Theileria parva (East coast fever infection agent) protein is Elongation factor Tu, apicoplast (tufA).